The chain runs to 871 residues: Protein pob1 (871 aa).

Positions 2–65 constitute an SH3 domain; it reads ASQRFVIALH…PASHVELISD (64 aa). A disordered region spans residues 42–168; that stretch reads WWEGEDEQGN…PSSDLSNFNT (127 aa). A compositionally biased stretch (basic and acidic residues) spans 62–80; it reads LISDERSDSSDSRRGKEDF. Composition is skewed to low complexity over residues 88-100 and 109-124; these read TRSSLSSSRSTSS and LYSNNSLSSSHSSILN. Over residues 131–168 the composition is skewed to polar residues; the sequence is SKPSVPSNFNSMFPSSKQEGPSPLLDNQPSSDLSNFNT. 2 positions are modified to phosphoserine: S224 and S225. Y229 carries the phosphotyrosine modification. S241 carries the phosphoserine modification. An SAM domain is found at 250 to 313; it reads WSTEEVVEWL…LRKIQQLKDS (64 aa). The span at 329–343 shows a compositional bias: low complexity; the sequence is ISVSQSSDSSSSIPK. Disordered regions lie at residues 329–371 and 384–670; these read ISVS…NRPT and PDLD…KSKR. 2 stretches are compositionally biased toward polar residues: residues 384 to 395 and 404 to 451; these read PDLDSSPSTDWN and TPSS…NSGL. Residues S433, S439, and S440 each carry the phosphoserine modification. A Phosphothreonine modification is found at T442. S444 carries the post-translational modification Phosphoserine. Positions 456 to 467 are enriched in low complexity; that stretch reads TEPISSPSTSSI. A compositionally biased stretch (polar residues) spans 492–511; sequence QPSSNVPTKFTGGASESSSV. The residue at position 549 (S549) is a Phosphoserine. A compositionally biased stretch (low complexity) spans 549–560; sequence SPSSISSRLPSS. Polar residues-rich tracts occupy residues 561 to 574 and 583 to 606; these read NLEQGSSSSVTKSP and KASSPVTSKGVSINEKSAVNNYAT. The PH domain occupies 698 to 808; it reads TADCHGWMRK…WSSAFLKATV (111 aa).

The protein resides in the cytoplasm. It localises to the membrane. In terms of biological role, has a role in cell elongation and separation. The polypeptide is Protein pob1 (pob1) (Schizosaccharomyces pombe (strain 972 / ATCC 24843) (Fission yeast)).